The sequence spans 309 residues: 2-oxoacid:ferredoxin oxidoreductase 2, subunit beta (309 aa).

[4Fe-4S] cluster contacts are provided by Cys17, Cys20, and Cys51. Thiamine diphosphate-binding positions include 49–52 (IGCS) and His68. Mg(2+) is bound at residue Asp93. 94-95 (GD) lines the thiamine diphosphate pocket. Mg(2+)-binding residues include Asn121 and Val123. Residue 125-126 (GL) participates in thiamine diphosphate binding. Cys200 is a [4Fe-4S] cluster binding site.

Heterodimer composed of an alpha and a beta subunit. It depends on [4Fe-4S] cluster as a cofactor. The cofactor is thiamine diphosphate. Mg(2+) is required as a cofactor.

It catalyses the reaction a 2-oxocarboxylate + 2 oxidized [2Fe-2S]-[ferredoxin] + CoA = an acyl-CoA + 2 reduced [2Fe-2S]-[ferredoxin] + CO2 + H(+). Catalyzes the coenzyme A-dependent oxidative decarboxylation of different 2-oxoacids such as pyruvate, 2-oxobutyrate, glyoxylate and 2-oxoglutarate to form their CoA derivatives. The chain is 2-oxoacid:ferredoxin oxidoreductase 2, subunit beta from Aeropyrum pernix (strain ATCC 700893 / DSM 11879 / JCM 9820 / NBRC 100138 / K1).